The following is a 310-amino-acid chain: MGKTKNTSLDAVVTDFILLGLSHPPNLRSLLFLVFFIIYILTQLGNLLILLTMWADPKLCARPMYILLGVLSFLDMWLSSVTVPLLILDFTPSIKAIPFGGCVAQLYFFHFLGSTQCFLYTLMAYDRYLAICQPLRYPVLMNGRLCTVLVAGAWVAGSMHGSIQATLTFRLPYCGPNQVDYFICDIPAVLRLACADTTVNELVTFVDVGVVAASCFMLILLSYANIVNAILKIRTTDGRRRAFSTCGSHLIVVTVYYVPCIFIYLRAGSKDPLDGAAAVFYTVVTPLLNPLIYTLRNQEVKSALKRITAG.

The Extracellular segment spans residues 1 to 29; it reads MGKTKNTSLDAVVTDFILLGLSHPPNLRS. An N-linked (GlcNAc...) asparagine glycan is attached at Asn-6. The chain crosses the membrane as a helical span at residues 30-50; that stretch reads LLFLVFFIIYILTQLGNLLIL. The Cytoplasmic portion of the chain corresponds to 51–58; it reads LTMWADPK. Residues 59–80 traverse the membrane as a helical segment; it reads LCARPMYILLGVLSFLDMWLSS. Over 81–104 the chain is Extracellular; the sequence is VTVPLLILDFTPSIKAIPFGGCVA. A disulfide bridge links Cys-102 with Cys-194. Residues 105-125 traverse the membrane as a helical segment; it reads QLYFFHFLGSTQCFLYTLMAY. At 126–144 the chain is on the cytoplasmic side; the sequence is DRYLAICQPLRYPVLMNGR. Residues 145–165 form a helical membrane-spanning segment; sequence LCTVLVAGAWVAGSMHGSIQA. Over 166–202 the chain is Extracellular; sequence TLTFRLPYCGPNQVDYFICDIPAVLRLACADTTVNEL. A helical membrane pass occupies residues 203-222; it reads VTFVDVGVVAASCFMLILLS. Residues 223 to 242 are Cytoplasmic-facing; sequence YANIVNAILKIRTTDGRRRA. Residues 243–263 traverse the membrane as a helical segment; it reads FSTCGSHLIVVTVYYVPCIFI. Residues 264–274 are Extracellular-facing; sequence YLRAGSKDPLD. The helical transmembrane segment at 275–295 threads the bilayer; the sequence is GAAAVFYTVVTPLLNPLIYTL. The Cytoplasmic portion of the chain corresponds to 296 to 310; it reads RNQEVKSALKRITAG.

This sequence belongs to the G-protein coupled receptor 1 family.

It is found in the cell membrane. Its function is as follows. Odorant receptor. This Homo sapiens (Human) protein is Olfactory receptor 10G2 (OR10G2).